The chain runs to 569 residues: Glycylpeptide N-tetradecanoyltransferase (569 aa).

The segment covering 1 to 18 (MPPTEESKPVDPAQEKQA) has biased composition (basic and acidic residues). A disordered region spans residues 1–82 (MPPTEESKPV…STESSAEVGL (82 aa)). Over residues 55–68 (TKKKNKKKSKKKNK) the composition is skewed to basic residues. Residues 158-161 (YKFW), 291-293 (LCI), and 299-303 (GKRLA) each bind tetradecanoyl-CoA. Catalysis depends on valine 569, which acts as the Proton acceptor; via carboxylate.

The protein belongs to the NMT family. As to quaternary structure, monomer.

It localises to the cytoplasm. It catalyses the reaction N-terminal glycyl-[protein] + tetradecanoyl-CoA = N-tetradecanoylglycyl-[protein] + CoA + H(+). Its function is as follows. Adds a myristoyl group to the N-terminal glycine residue of certain cellular proteins. The sequence is that of Glycylpeptide N-tetradecanoyltransferase (gtt-1) from Neurospora crassa (strain ATCC 24698 / 74-OR23-1A / CBS 708.71 / DSM 1257 / FGSC 987).